Here is an 848-residue protein sequence, read N- to C-terminus: DNA mismatch repair protein MutS (848 aa).

605–612 contacts ATP; sequence GPNMAGKS.

It belongs to the DNA mismatch repair MutS family.

Its function is as follows. This protein is involved in the repair of mismatches in DNA. It is possible that it carries out the mismatch recognition step. This protein has a weak ATPase activity. The sequence is that of DNA mismatch repair protein MutS from Leptospira interrogans serogroup Icterohaemorrhagiae serovar copenhageni (strain Fiocruz L1-130).